The sequence spans 246 residues: Ribosomal RNA small subunit methyltransferase G (246 aa).

S-adenosyl-L-methionine is bound by residues Gly-81, Phe-86, 137-138, and Arg-156; that span reads AE. Residues 221–246 are disordered; that stretch reads LVLIRKERPTPKAYPRRAGVPAKSPL.

Belongs to the methyltransferase superfamily. RNA methyltransferase RsmG family.

The protein localises to the cytoplasm. Specifically methylates the N7 position of a guanine in 16S rRNA. The sequence is that of Ribosomal RNA small subunit methyltransferase G from Symbiobacterium thermophilum (strain DSM 24528 / JCM 14929 / IAM 14863 / T).